The sequence spans 603 residues: Sabinene hydrate synthase, chloroplastic (603 aa).

The N-terminal 47 residues, 1 to 47 (MSTISINHVGLLRNPLHGKSKRASINKSWSLCLPRSSSASRLVKPCR), are a transit peptide targeting the chloroplast. Mn(2+) is bound by residues Asp357 and Asp361. The DDXXD motif motif lies at 357 to 361 (DDVYD). Homodimerization stretches follow at residues 363-369 (YGTLDEL) and 435-472 (EAEW…VSIP). Residues Asp501 and Glu509 each coordinate Mn(2+).

It belongs to the terpene synthase family. As to quaternary structure, homodimer. Mn(2+) serves as cofactor. Requires Mg(2+) as cofactor.

It is found in the plastid. The protein localises to the chloroplast. It carries out the reaction (2E)-geranyl diphosphate + H2O = sabinene hydrate + diphosphate. It participates in secondary metabolite biosynthesis; terpenoid biosynthesis. In terms of biological role, involved in the biosynthesis of phenolic monoterpenes natural products. Monoterpene synthase which catalyzes the conversion of geranyl diphosphate (GPP) to sabinene hydrate, mainly (Z)-sabinene hydrate and to a lower extent (E)-sabinene hydrate, and the formation of minor amounts and traces of several other monoterpenes (e.g. mainly alpha-thujene, alpha-pinene and myrcene). The protein is Sabinene hydrate synthase, chloroplastic of Thymus vulgaris (Thyme).